We begin with the raw amino-acid sequence, 312 residues long: Retinol dehydrogenase 8 (312 aa).

9–18 lines the NADP(+) pocket; it reads LISGCSSGIG. A run of 3 helical transmembrane segments spans residues 87–107, 138–158, and 170–190; these read VLVNNAGVGLVGPLEGLSLAA, IVVVSSVMGLQGVVFNEVYAA, and LAVQLLQFNIFISLVEPGPVV. Ser143 contributes to the substrate binding site. The Proton acceptor role is filled by Tyr156.

Belongs to the short-chain dehydrogenases/reductases (SDR) family. As to expression, detected in photoreceptor outer segments in the retina (at protein level).

The protein resides in the membrane. It carries out the reaction all-trans-retinol + NADP(+) = all-trans-retinal + NADPH + H(+). Retinol dehydrogenase with a clear preference for NADP. Converts all-trans-retinal to all-trans-retinol. May play a role in the regeneration of visual pigment at high light intensity. The polypeptide is Retinol dehydrogenase 8 (RDH8) (Bos taurus (Bovine)).